We begin with the raw amino-acid sequence, 424 residues long: MSRDKSERDNLQDTTTINLRRRRRVKEGKAASKPPQVYPLMKCKLRYLKLKKLAHLLSLEDNILSLCEPDKSSEGSNSQKHVVEQLRGSPLSVGTLEEFVDDHHGIITTGVGLEYYVNIMSFVDKDLLEPGCTVLLNYKDNSVVGVLEGEMDPMVNVMKLEKAPSETYADIGGLEEQIQEIKESVELPLTNPELYQEMGIKPPKGVILYGLPGTGKTLLAKAVANQTSATFLRVVGTELIQEYLGEGPKLVRELFRVADMHAPSIIFIDEIDAIGGKRYNTSSGGRREVQRTMLELLNQLDGFDTRNDIKVIMATNKIEALDPALIRPGRIDRKIEFGMPDAATKKKIFDIHTSRMTLDESVNIELLITSKEDLSGADIKAICTEAGMIALRERRKTVTMKDFISAREKVFFSKQKMVSAGLYS.

The span at 1–11 shows a compositional bias: basic and acidic residues; it reads MSRDKSERDNL. The segment at 1-33 is disordered; the sequence is MSRDKSERDNLQDTTTINLRRRRRVKEGKAASK. ATP is bound at residue 210–217; that stretch reads GLPGTGKT.

This sequence belongs to the AAA ATPase family. As to quaternary structure, the 26S proteasome consists of a 20S proteasome core and two 19S regulatory subunits. The 20S proteasome core is composed of 28 subunits that are arranged in four stacked rings, resulting in a barrel-shaped structure. The two end rings are each formed by seven alpha subunits, and the two central rings are each formed by seven beta subunits. The catalytic chamber with the active sites is on the inside of the barrel.

It localises to the cytoplasm. The protein localises to the nucleus. Functionally, acts as a regulatory subunit of the 26S proteasome which degrades poly-ubiquitinated proteins in the cytoplasm and in the nucleus. It is essential for the regulated turnover of proteins and for the removal of misfolded proteins. The proteasome is a multicatalytic proteinase complex that is characterized by its ability to cleave peptides with Arg, Phe, Tyr, Leu, and Glu adjacent to the leaving group at neutral or slightly basic pH. The protein is 26S proteasome regulatory subunit 4 homolog (RPT2) of Encephalitozoon cuniculi (strain GB-M1) (Microsporidian parasite).